The sequence spans 148 residues: Large-conductance mechanosensitive channel (148 aa).

Helical transmembrane passes span 16–36 and 89–109; these read VMDL…VNSI and GSFI…FLMV.

It belongs to the MscL family. In terms of assembly, homopentamer.

The protein localises to the cell inner membrane. In terms of biological role, channel that opens in response to stretch forces in the membrane lipid bilayer. May participate in the regulation of osmotic pressure changes within the cell. This is Large-conductance mechanosensitive channel from Paraburkholderia phytofirmans (strain DSM 17436 / LMG 22146 / PsJN) (Burkholderia phytofirmans).